Consider the following 270-residue polypeptide: Urease accessory protein UreD (270 aa).

This sequence belongs to the UreD family. In terms of assembly, ureD, UreF and UreG form a complex that acts as a GTP-hydrolysis-dependent molecular chaperone, activating the urease apoprotein by helping to assemble the nickel containing metallocenter of UreC. The UreE protein probably delivers the nickel.

The protein resides in the cytoplasm. In terms of biological role, required for maturation of urease via the functional incorporation of the urease nickel metallocenter. This chain is Urease accessory protein UreD, found in Synechocystis sp. (strain ATCC 27184 / PCC 6803 / Kazusa).